The following is a 342-amino-acid chain: Cathepsin B-like cysteine proteinase (342 aa).

An N-terminal signal peptide occupies residues 1-17 (MLKIAVYIVSLFTFLEA). A propeptide spans 18-89 (HVTTRNNQRI…TVDHHDLNVE (72 aa)) (activation peptide). Disulfide bonds link Cys103-Cys132, Cys115-Cys159, Cys151-Cys217, Cys152-Cys155, Cys188-Cys221, and Cys196-Cys207. Cys118 is an active-site residue. Residues His288 and Asn308 contribute to the active site.

It belongs to the peptidase C1 family. In terms of tissue distribution, intestine (gut).

Its function is as follows. Thiol protease. Has a role as a digestive enzyme. The polypeptide is Cathepsin B-like cysteine proteinase (CATB) (Schistosoma japonicum (Blood fluke)).